Reading from the N-terminus, the 105-residue chain is Intermembrane phospholipid transport system binding protein MlaB (105 aa).

Residues 4 to 105 (WDLQKNNDKI…GLSDWIANFI (102 aa)) form the STAS domain.

In terms of assembly, the complex is composed of two ATP-binding proteins (MlaF), two transmembrane proteins (MlaE), two cytoplasmic solute-binding proteins (MlaB) and six periplasmic solute-binding proteins (MlaD).

Its subcellular location is the cytoplasm. Part of the ABC transporter complex MlaFEDB, which is involved in a phospholipid transport pathway that maintains lipid asymmetry in the outer membrane by retrograde trafficking of phospholipids from the outer membrane to the inner membrane. MlaB plays critical roles in both the assembly and activity of the complex. May act by modulating MlaF structure and stability. This is Intermembrane phospholipid transport system binding protein MlaB from Haemophilus influenzae (strain ATCC 51907 / DSM 11121 / KW20 / Rd).